Reading from the N-terminus, the 173-residue chain is Crossover junction endodeoxyribonuclease RuvC (173 aa).

Active-site residues include aspartate 8, glutamate 69, and aspartate 141. Mg(2+)-binding residues include aspartate 8, glutamate 69, and aspartate 141.

It belongs to the RuvC family. As to quaternary structure, homodimer which binds Holliday junction (HJ) DNA. The HJ becomes 2-fold symmetrical on binding to RuvC with unstacked arms; it has a different conformation from HJ DNA in complex with RuvA. In the full resolvosome a probable DNA-RuvA(4)-RuvB(12)-RuvC(2) complex forms which resolves the HJ. Requires Mg(2+) as cofactor.

It localises to the cytoplasm. It carries out the reaction Endonucleolytic cleavage at a junction such as a reciprocal single-stranded crossover between two homologous DNA duplexes (Holliday junction).. Its function is as follows. The RuvA-RuvB-RuvC complex processes Holliday junction (HJ) DNA during genetic recombination and DNA repair. Endonuclease that resolves HJ intermediates. Cleaves cruciform DNA by making single-stranded nicks across the HJ at symmetrical positions within the homologous arms, yielding a 5'-phosphate and a 3'-hydroxyl group; requires a central core of homology in the junction. The consensus cleavage sequence is 5'-(A/T)TT(C/G)-3'. Cleavage occurs on the 3'-side of the TT dinucleotide at the point of strand exchange. HJ branch migration catalyzed by RuvA-RuvB allows RuvC to scan DNA until it finds its consensus sequence, where it cleaves and resolves the cruciform DNA. This is Crossover junction endodeoxyribonuclease RuvC from Stenotrophomonas maltophilia (strain R551-3).